The chain runs to 391 residues: Terminal nucleotidyltransferase 5C (391 aa).

It belongs to the TENT family. In terms of assembly, interacts with BCCIP and PABPC1; the interaction has no effect on TENT5C poly(A) polymerase function. Interacts with PLK4; this interaction leads to the TENT5C recruitment into the centrosome.

The protein localises to the nucleus. The protein resides in the cytoplasm. It is found in the cytoskeleton. Its subcellular location is the microtubule organizing center. It localises to the centrosome. The enzyme catalyses RNA(n) + ATP = RNA(n)-3'-adenine ribonucleotide + diphosphate. Catalyzes the transfer of one adenosine molecule from an ATP to an mRNA poly(A) tail bearing a 3'-OH terminal group and enhances mRNA stability and gene expression. Can also elongate RNA oligos ending with uridine molecule, provided that the sequence is adenosine-rich. Mainly targets mRNAs encoding endoplasmic reticulum-targeted protein. The polypeptide is Terminal nucleotidyltransferase 5C (Macaca fascicularis (Crab-eating macaque)).